We begin with the raw amino-acid sequence, 128 residues long: Tachykinin-4 (128 aa).

The signal sequence occupies residues 1–16 (MLPLLALLLLIGPSVC). Residues 17–54 (TTAGDREELAFGAEAESWVTVNLKGIPVPSIELKLQEL) constitute a propeptide that is removed on maturation. A Methionine amide modification is found at Met66. A propeptide spanning residues 69 to 128 (RVGGYQLGRIVQDLLGTRGLSIEGTCRQAASQQRARPGAVTRESLQSREEDEAPLTTSNV) is cleaved from the precursor. The tract at residues 96 to 128 (QAASQQRARPGAVTRESLQSREEDEAPLTTSNV) is disordered.

It belongs to the tachykinin family. As to expression, expressed in hematopoietic cells with highest levels in pre- and pro-B cells but not in later developmental stages. Also detected in uterus, skeletal muscle, brain, spleen, stomach, skin and lactating mammary gland and in cells of myeloid lineage including dendritic and microglial cells and macrophages. In uterus, highest expression is observed in non-pregnant diestrus mice and in day 5 pregnant mice. Compared with mice in diestrus, decreases 2.6-fold in uteri from non-pregnant mice in estrus and 10.2-fold in day 17 pregnant mice. Detected at sites of chronic inflammation such as granulomas.

The protein localises to the secreted. Tachykinins are active peptides which excite neurons, evoke behavioral responses, are potent vasodilators and secretagogues, and contract (directly or indirectly) many smooth muscles. Hemokinin induces plasma extravasation, mast cell degranulation, muscle contraction, salivary secretion and scratching behavior. Increases sperm motility. Induces potent analgesic effects and may play a role in pain modulation. Promotes survival of bone marrow B lineage cells and of cultured LPS-stimulated pre-B cells and may act as an autocrine factor required for B-cell survival and proliferation. Lowers systemic arterial pressure following intravenous injection. Induces interferon-gamma production and may play a role in the inflammatory response. Shows potent affinity and specificity for the NK-1 receptor. The chain is Tachykinin-4 from Mus musculus (Mouse).